The following is a 102-amino-acid chain: Ribonuclease P protein component 1 (102 aa).

This sequence belongs to the eukaryotic/archaeal RNase P protein component 1 family. In terms of assembly, consists of a catalytic RNA component and at least 4-5 protein subunits.

Its subcellular location is the cytoplasm. The catalysed reaction is Endonucleolytic cleavage of RNA, removing 5'-extranucleotides from tRNA precursor.. In terms of biological role, part of ribonuclease P, a protein complex that generates mature tRNA molecules by cleaving their 5'-ends. The chain is Ribonuclease P protein component 1 from Archaeoglobus fulgidus (strain ATCC 49558 / DSM 4304 / JCM 9628 / NBRC 100126 / VC-16).